A 50-amino-acid chain; its full sequence is Thrombin-like enzyme BpirSP41 (50 aa).

The region spanning 1–50 (VVGGDECDINEHPFLAFLYSHGYFCGLTLINQEWVLTAAHCDRRFMRIYL) is the Peptidase S1 domain. C25 and C41 form a disulfide bridge. H40 functions as the Charge relay system in the catalytic mechanism.

Belongs to the peptidase S1 family. Snake venom subfamily. In terms of assembly, monomer. N-glycosylated. In terms of tissue distribution, expressed by the venom gland.

The protein localises to the secreted. Inhibited by serine protease inhibitors PMSF, benzamidine, leupeptin and aprotinin, as well as by copper ions (Cu2+). Not inhibited by metalloprotease inhibitors EDTA, EGTA and 1,10-phenanthroline, as well as by barium (Ba2+) and calcium ion (Ca2+). Snake venom serine protease that interferes with the hemostatic system of the prey. It almost completely degrades both Aalpha (FGA) and Bbeta (FGB) chains of fibrinogen. It presents a higher ability to degrade fibrin clots than BpirSP27. It hydrolyzes chromogenic substrates S-2238 (used for testing thrombin activity), S-2222 (factor Xa), S-2266 (glandular kallikrein and factor XIa), and S-2302 (plasma kallikrein, factor XIa and XIIa). It shows a decrease in the clotting time of human plasma in the presence of increasing doses of the enzyme. Its minimum coagulant dose (MCD) is 20 ug. It promotes platelet aggregation with a maximum of aggregation of 20%, regardless of the concentration increase or the presence of calcium. It also shows 40% inhibition of the hemolytic activity promoted by the complement pathways and possess only a minor role in the induction of edema and pain in rat. The chain is Thrombin-like enzyme BpirSP41 from Bothrops pirajai (Piraja's lancehead).